The primary structure comprises 405 residues: Probable tRNA sulfurtransferase (405 aa).

One can recognise a THUMP domain in the interval 60 to 165 (DKVMGRLKLV…LNGIFLSSET (106 aa)). ATP is bound by residues 183-184 (ML), 208-209 (HF), arginine 265, glycine 287, and glutamine 296.

It belongs to the ThiI family.

It localises to the cytoplasm. The catalysed reaction is [ThiI sulfur-carrier protein]-S-sulfanyl-L-cysteine + a uridine in tRNA + 2 reduced [2Fe-2S]-[ferredoxin] + ATP + H(+) = [ThiI sulfur-carrier protein]-L-cysteine + a 4-thiouridine in tRNA + 2 oxidized [2Fe-2S]-[ferredoxin] + AMP + diphosphate. The enzyme catalyses [ThiS sulfur-carrier protein]-C-terminal Gly-Gly-AMP + S-sulfanyl-L-cysteinyl-[cysteine desulfurase] + AH2 = [ThiS sulfur-carrier protein]-C-terminal-Gly-aminoethanethioate + L-cysteinyl-[cysteine desulfurase] + A + AMP + 2 H(+). Its pathway is cofactor biosynthesis; thiamine diphosphate biosynthesis. Functionally, catalyzes the ATP-dependent transfer of a sulfur to tRNA to produce 4-thiouridine in position 8 of tRNAs, which functions as a near-UV photosensor. Also catalyzes the transfer of sulfur to the sulfur carrier protein ThiS, forming ThiS-thiocarboxylate. This is a step in the synthesis of thiazole, in the thiamine biosynthesis pathway. The sulfur is donated as persulfide by IscS. The polypeptide is Probable tRNA sulfurtransferase (Lactiplantibacillus plantarum (strain ATCC BAA-793 / NCIMB 8826 / WCFS1) (Lactobacillus plantarum)).